Consider the following 208-residue polypeptide: Large ribosomal subunit protein uL3 (208 aa).

Gln149 is subject to N5-methylglutamine.

It belongs to the universal ribosomal protein uL3 family. Part of the 50S ribosomal subunit. Forms a cluster with proteins L14 and L19. Post-translationally, methylated by PrmB.

Functionally, one of the primary rRNA binding proteins, it binds directly near the 3'-end of the 23S rRNA, where it nucleates assembly of the 50S subunit. The chain is Large ribosomal subunit protein uL3 from Glaesserella parasuis serovar 5 (strain SH0165) (Haemophilus parasuis).